We begin with the raw amino-acid sequence, 356 residues long: Histidinol-phosphate aminotransferase (356 aa).

Position 214 is an N6-(pyridoxal phosphate)lysine (lysine 214).

The protein belongs to the class-II pyridoxal-phosphate-dependent aminotransferase family. Histidinol-phosphate aminotransferase subfamily. In terms of assembly, homodimer. Pyridoxal 5'-phosphate is required as a cofactor.

The catalysed reaction is L-histidinol phosphate + 2-oxoglutarate = 3-(imidazol-4-yl)-2-oxopropyl phosphate + L-glutamate. It participates in amino-acid biosynthesis; L-histidine biosynthesis; L-histidine from 5-phospho-alpha-D-ribose 1-diphosphate: step 7/9. This Escherichia coli O6:K15:H31 (strain 536 / UPEC) protein is Histidinol-phosphate aminotransferase.